Reading from the N-terminus, the 573-residue chain is Proline--tRNA ligase (573 aa).

Belongs to the class-II aminoacyl-tRNA synthetase family. ProS type 1 subfamily. In terms of assembly, homodimer.

It is found in the cytoplasm. The catalysed reaction is tRNA(Pro) + L-proline + ATP = L-prolyl-tRNA(Pro) + AMP + diphosphate. Catalyzes the attachment of proline to tRNA(Pro) in a two-step reaction: proline is first activated by ATP to form Pro-AMP and then transferred to the acceptor end of tRNA(Pro). As ProRS can inadvertently accommodate and process non-cognate amino acids such as alanine and cysteine, to avoid such errors it has two additional distinct editing activities against alanine. One activity is designated as 'pretransfer' editing and involves the tRNA(Pro)-independent hydrolysis of activated Ala-AMP. The other activity is designated 'posttransfer' editing and involves deacylation of mischarged Ala-tRNA(Pro). The misacylated Cys-tRNA(Pro) is not edited by ProRS. This is Proline--tRNA ligase from Geobacter sp. (strain M21).